A 267-amino-acid chain; its full sequence is MEGYSRNGEISPKLLDLMIPQERRNWFHDEKNSVFKTEEKKLELKLGPPGEEDDDESMIRHMKKEPKDKSILSLAGKYFSPSSTKTTSHKRTAPGPVVGWPPVRSFRKNLASGSSSKLGNDSTTSNGVTLKNQKCDAAAKTTEPKRQGGMFVKINMYGVPIGRKVDLSAHNSYEQLSFTVDKLFRGLLAAQRDFPSSIEDEKPITGLLDGNGEYTLTYEDNEGDKMLVGDVPWQMFVSSVKRLRVIKTSEISSALTYGNGKQEKMRR.

The EAR-like (transcriptional repression) motif lies at Leu-42 to Leu-46. Residues Pro-81–Pro-101 are disordered. In terms of domain architecture, PB1 spans Gly-149–Thr-248.

Belongs to the Aux/IAA family. Homodimers and heterodimers. Interacts with TPL.

The protein resides in the nucleus. Its function is as follows. Aux/IAA proteins are short-lived transcriptional factors that function as repressors of early auxin response genes at low auxin concentrations. Repression is thought to result from the interaction with auxin response factors (ARFs), proteins that bind to the auxin-responsive promoter element (AuxRE). Formation of heterodimers with ARF proteins may alter their ability to modulate early auxin response genes expression. The chain is Auxin-responsive protein IAA18 (IAA18) from Arabidopsis thaliana (Mouse-ear cress).